Consider the following 286-residue polypeptide: Polyamine aminopropyltransferase (286 aa).

Positions Lys5 to Asn238 constitute a PABS domain. Spermidine-binding residues include His64 and Asp88. S-methyl-5'-thioadenosine-binding positions include Glu108 and Asp140–Gly141. Asp158 acts as the Proton acceptor in catalysis. A spermidine-binding site is contributed by Asp158–Asp161.

This sequence belongs to the spermidine/spermine synthase family. In terms of assembly, homodimer or homotetramer.

It localises to the cytoplasm. It catalyses the reaction S-adenosyl 3-(methylsulfanyl)propylamine + putrescine = S-methyl-5'-thioadenosine + spermidine + H(+). The protein operates within amine and polyamine biosynthesis; spermidine biosynthesis; spermidine from putrescine: step 1/1. Its function is as follows. Catalyzes the irreversible transfer of a propylamine group from the amino donor S-adenosylmethioninamine (decarboxy-AdoMet) to putrescine (1,4-diaminobutane) to yield spermidine. This is Polyamine aminopropyltransferase from Buchnera aphidicola subsp. Acyrthosiphon pisum (strain 5A).